A 208-amino-acid chain; its full sequence is Large ribosomal subunit protein uL3 (208 aa).

N5-methylglutamine is present on Gln-149.

The protein belongs to the universal ribosomal protein uL3 family. In terms of assembly, part of the 50S ribosomal subunit. Forms a cluster with proteins L14 and L19. In terms of processing, methylated by PrmB.

In terms of biological role, one of the primary rRNA binding proteins, it binds directly near the 3'-end of the 23S rRNA, where it nucleates assembly of the 50S subunit. The chain is Large ribosomal subunit protein uL3 from Haemophilus influenzae (strain 86-028NP).